Reading from the N-terminus, the 139-residue chain is Ribulose bisphosphate carboxylase small subunit (139 aa).

The protein belongs to the RuBisCO small chain family. As to quaternary structure, heterohexadecamer of 8 large and 8 small subunits.

The protein localises to the plastid. Its subcellular location is the chloroplast. Functionally, ruBisCO catalyzes two reactions: the carboxylation of D-ribulose 1,5-bisphosphate, the primary event in carbon dioxide fixation, as well as the oxidative fragmentation of the pentose substrate in the photorespiration process. Both reactions occur simultaneously and in competition at the same active site. Although the small subunit is not catalytic it is essential for maximal activity. The polypeptide is Ribulose bisphosphate carboxylase small subunit (Trieres chinensis (Marine centric diatom)).